The primary structure comprises 374 residues: Flap endonuclease 1 (374 aa).

The tract at residues 1–105 is N-domain; that stretch reads MGVKGLNQLI…GELEKRMIRK (105 aa). Aspartate 34 provides a ligand contact to Mg(2+). Arginine 47 and arginine 71 together coordinate DNA. The Mg(2+) site is built by aspartate 87, glutamate 159, glutamate 161, aspartate 180, and aspartate 182. Residues 123–254 are I-domain; it reads EMVRYEKRSV…VTAFKLIKEH (132 aa). Glutamate 159 contributes to the DNA binding site. Glycine 232 and aspartate 234 together coordinate DNA. Residue aspartate 234 coordinates Mg(2+). Residues 341 to 349 are interaction with PCNA; sequence VQGRLDGFF. Residues 354 to 365 show a composition bias toward basic and acidic residues; sequence TEKRKPEQDKKT. The tract at residues 354 to 374 is disordered; that stretch reads TEKRKPEQDKKTKGSKKAKKK.

This sequence belongs to the XPG/RAD2 endonuclease family. FEN1 subfamily. As to quaternary structure, interacts with PCNA. Three molecules of FEN1 bind to one PCNA trimer with each molecule binding to one PCNA monomer. PCNA stimulates the nuclease activity without altering cleavage specificity. The cofactor is Mg(2+). In terms of processing, phosphorylated. Phosphorylation upon DNA damage induces relocalization to the nuclear plasma.

The protein resides in the nucleus. It is found in the nucleolus. Its subcellular location is the nucleoplasm. It localises to the mitochondrion. Structure-specific nuclease with 5'-flap endonuclease and 5'-3' exonuclease activities involved in DNA replication and repair. During DNA replication, cleaves the 5'-overhanging flap structure that is generated by displacement synthesis when DNA polymerase encounters the 5'-end of a downstream Okazaki fragment. It enters the flap from the 5'-end and then tracks to cleave the flap base, leaving a nick for ligation. Also involved in the long patch base excision repair (LP-BER) pathway, by cleaving within the apurinic/apyrimidinic (AP) site-terminated flap. Acts as a genome stabilization factor that prevents flaps from equilibrating into structures that lead to duplications and deletions. Also possesses 5'-3' exonuclease activity on nicked or gapped double-stranded DNA, and exhibits RNase H activity. Also involved in replication and repair of rDNA and in repairing mitochondrial DNA. In Meyerozyma guilliermondii (strain ATCC 6260 / CBS 566 / DSM 6381 / JCM 1539 / NBRC 10279 / NRRL Y-324) (Yeast), this protein is Flap endonuclease 1.